The sequence spans 182 residues: CASP-like protein 2B1 (182 aa).

Residues 1–12 (MKLIDRRMRLTE) are Cytoplasmic-facing. A helical transmembrane segment spans residues 13–31 (LLLRCSISVFALLALILVV). The Extracellular segment spans residues 32-52 (TDTEVKLIFTIKKTAKYTDMK). The chain crosses the membrane as a helical span at residues 53 to 73 (AVVFLVVANGIAAVYSLLQSV). Residues 74-89 (RCVVGTMKGRVLFSKP) are Cytoplasmic-facing. The chain crosses the membrane as a helical span at residues 90–110 (LAWAFFSGDQAMAYLNVAAIA). Topologically, residues 111–141 (ATAESGVIAREGEEDLQWMRVCNMYGKFCNQ) are extracellular. A helical transmembrane segment spans residues 142 to 162 (MAIGVSSALLASIAMVFVSCI). Topologically, residues 163–182 (SAFSLFRLYGATRDRRTTPW) are cytoplasmic.

Belongs to the Casparian strip membrane proteins (CASP) family. Homodimer and heterodimers.

The protein resides in the cell membrane. The sequence is that of CASP-like protein 2B1 from Arabidopsis lyrata subsp. lyrata (Lyre-leaved rock-cress).